The sequence spans 372 residues: Glutamate 5-kinase (372 aa).

Position 14 (Lys14) interacts with ATP. Substrate contacts are provided by Ser54, Asp141, and Asn153. 173 to 174 (TD) is a binding site for ATP. A PUA domain is found at 280–358 (RGTLVLDAGA…DAIESILGYS (79 aa)).

The protein belongs to the glutamate 5-kinase family.

It localises to the cytoplasm. It carries out the reaction L-glutamate + ATP = L-glutamyl 5-phosphate + ADP. Its pathway is amino-acid biosynthesis; L-proline biosynthesis; L-glutamate 5-semialdehyde from L-glutamate: step 1/2. Functionally, catalyzes the transfer of a phosphate group to glutamate to form L-glutamate 5-phosphate. The sequence is that of Glutamate 5-kinase from Pseudomonas putida (strain GB-1).